The chain runs to 163 residues: Phospholipase A2 homolog 3 (163 aa).

Positions M1 to Q43 are cleaved as a signal peptide. Disulfide bonds link C55/C83, C59/C89, C64/C137, C76/C96, C95/C121, and C102/C114. The Ca(2+) site is built by Y75, G77, and Y80. H99 is an active-site residue. D100 serves as a coordination point for Ca(2+).

The protein belongs to the phospholipase A2 family. Requires Ca(2+) as cofactor.

The protein localises to the secreted. The enzyme catalyses a 1,2-diacyl-sn-glycero-3-phosphocholine + H2O = a 1-acyl-sn-glycero-3-phosphocholine + a fatty acid + H(+). Its activity is regulated as follows. Inhibited by EGTA. Its function is as follows. PA2 catalyzes the calcium-dependent hydrolysis of the 2-acyl groups in 3-sn-phosphoglycerides. Releases lysophospholipids (LPLs) and free fatty acids (FFAs) from membrane phospholipids in response to hormones and other external stimuli. This chain is Phospholipase A2 homolog 3 (PLA2-III), found in Oryza sativa subsp. japonica (Rice).